The primary structure comprises 141 residues: Endoribonuclease YbeY (141 aa).

Residues His-107, His-111, and Asp-117 each contribute to the Zn(2+) site.

This sequence belongs to the endoribonuclease YbeY family. It depends on Zn(2+) as a cofactor.

It localises to the cytoplasm. Functionally, single strand-specific metallo-endoribonuclease involved in late-stage 70S ribosome quality control and in maturation of the 3' terminus of the 16S rRNA. The polypeptide is Endoribonuclease YbeY (Endomicrobium trichonymphae).